Here is a 123-residue protein sequence, read N- to C-terminus: Large ribosomal subunit protein bL12 (123 aa).

Belongs to the bacterial ribosomal protein bL12 family. As to quaternary structure, homodimer. Part of the ribosomal stalk of the 50S ribosomal subunit. Forms a multimeric L10(L12)X complex, where L10 forms an elongated spine to which 2 to 4 L12 dimers bind in a sequential fashion. Binds GTP-bound translation factors.

Its function is as follows. Forms part of the ribosomal stalk which helps the ribosome interact with GTP-bound translation factors. Is thus essential for accurate translation. This Wigglesworthia glossinidia brevipalpis protein is Large ribosomal subunit protein bL12.